The chain runs to 216 residues: Large ribosomal subunit protein uL3 (216 aa).

Position 157 is an N5-methylglutamine (Gln-157).

It belongs to the universal ribosomal protein uL3 family. As to quaternary structure, part of the 50S ribosomal subunit. Forms a cluster with proteins L14 and L19. In terms of processing, methylated by PrmB.

One of the primary rRNA binding proteins, it binds directly near the 3'-end of the 23S rRNA, where it nucleates assembly of the 50S subunit. This Xanthomonas axonopodis pv. citri (strain 306) protein is Large ribosomal subunit protein uL3.